A 429-amino-acid chain; its full sequence is Protein cereblon (429 aa).

The interval 1 to 30 (MGNHLPLLPAESEEEDEMEVEDQDSKEAKK) is disordered. The segment covering 11–22 (ESEEEDEMEVED) has biased composition (acidic residues). Ser-12 is subject to Phosphoserine. The region spanning 68–306 (IPVLPQVMMI…CELDIMNKCT (239 aa)) is the Lon N-terminal domain. A CULT domain is found at 305–413 (CTSLCCKQCQ…LTRSALLPTI (109 aa)). Cys-310 and Cys-313 together coordinate Zn(2+). (S)-thalidomide contacts are provided by His-365, Trp-367, and Trp-373. The Zn(2+) site is built by Cys-378 and Cys-381.

Belongs to the CRBN family. Component of a DCX (DDB1-CUL4-X-box) protein ligase complex, at least composed of CRBN, CUL4A, DDB1 and RBX1. Interacts directly with DDB1. Interacts with KCNT1. Interacts with ILF2. Interacts with TRAF6 and ECSIT. Ubiquitinated, ubiquitination is mediated by its own DCX protein ligase complex.

The protein resides in the cytoplasm. It is found in the nucleus. Its subcellular location is the membrane. Its pathway is protein modification; protein ubiquitination. Functionally, substrate recognition component of a DCX (DDB1-CUL4-X-box) E3 protein ligase complex that mediates the ubiquitination and subsequent proteasomal degradation of target proteins, such as MEIS2, ILF2 or GLUL. Normal degradation of key regulatory proteins is required for normal limb outgrowth and expression of the fibroblast growth factor FGF8. Maintains presynaptic glutamate release and consequently cognitive functions, such as memory and learning, by negatively regulating large-conductance calcium-activated potassium (BK) channels in excitatory neurons. Likely to function by regulating the assembly and neuronal surface expression of BK channels via its interaction with KCNT1. May also be involved in regulating anxiety-like behaviors via a BK channel-independent mechanism. Plays a negative role in TLR4 signaling by interacting with TRAF6 and ECSIT, leading to inhibition of ECSIT ubiquitination, an important step of the signaling. The sequence is that of Protein cereblon (CRBN) from Pongo abelii (Sumatran orangutan).